The sequence spans 484 residues: uncharacterized protein (484 aa).

A run of 12 helical transmembrane segments spans residues 19-39 (LSFGVGITLWALIVFAYMIFV), 78-98 (VNWGITIGRGIGSVLVGWLIV), 110-130 (LFFMLFGIIAPYSPTYAGFII), 134-154 (IFAIGGTMQIILIQPVVSNYL), 165-185 (FSPFFYPIGTIITLIPFAGII), 199-219 (IVFLVIGLLTLIPLIGYIILG), 249-269 (TWYWTILYGSWLVAVVFPFTF), 289-309 (ISVFLIFFLAGMFLGPFTIGL), 321-341 (ISTIITLGVFFYVLATVVFVL), 360-380 (LFLFLGLFMGICLWGIQGVML), 398-418 (FGLIWGLGYTAFTIATIITSL), and 440-460 (LGAYILIIIFSLVSSIGLALL).

The protein resides in the cell membrane. This is an uncharacterized protein from Mesomycoplasma hyopneumoniae (strain J / ATCC 25934 / NCTC 10110) (Mycoplasma hyopneumoniae).